The sequence spans 550 residues: Retron Ec78 probable ATPase (550 aa).

The ATP-binding signature appears at 93 to 100 (GNNGKGKT).

In terms of biological role, probable ATPase component of antiviral defense system retron Ec78, composed of a non-coding RNA (ncRNA), a reverse transcriptase (RT), this protein and a putative HNH endonuclease. Expression of retron Ec78 confers protection against bacteriophage T5. At multiplicity of infection (MOI) of 0.02 cultures slow growth when infected with T5 but do not collapse, at MOI 2 cultures enter growth stasis. This is Retron Ec78 probable ATPase from Escherichia coli.